We begin with the raw amino-acid sequence, 164 residues long: Transcription elongation factor GreA (164 aa).

The protein belongs to the GreA/GreB family.

Functionally, necessary for efficient RNA polymerase transcription elongation past template-encoded arresting sites. The arresting sites in DNA have the property of trapping a certain fraction of elongating RNA polymerases that pass through, resulting in locked ternary complexes. Cleavage of the nascent transcript by cleavage factors such as GreA or GreB allows the resumption of elongation from the new 3'terminus. GreA releases sequences of 2 to 3 nucleotides. The polypeptide is Transcription elongation factor GreA (Helicobacter pylori (strain J99 / ATCC 700824) (Campylobacter pylori J99)).